The chain runs to 543 residues: Protein male-specific lethal-3 (543 aa).

The region spanning 10-90 (LFNRGEKVLC…KLQRELAEAA (81 aa)) is the Chromo domain. The segment at 93 to 247 (QKTGGYSYKD…THTTDAEKRI (155 aa)) is disordered. Composition is skewed to basic and acidic residues over residues 180–202 (RSRD…DNSS), 210–224 (KSKG…ERRS), and 234–247 (SPKD…EKRI). An MRG domain is found at 249–542 (QEDRVMLRIS…PLIDQGRELS (294 aa)).

In terms of assembly, component of the male-specific lethal (MSL) histone acetyltransferase complex, composed of mof, mle, msl-1, msl-2 and msl-3 proteins, as well as roX1 and roX2 non-coding RNAs. Ubiquitinated by msl-2.

It localises to the nucleus. Its subcellular location is the chromosome. In terms of biological role, component of the male-specific lethal (MSL) histone acetyltransferase complex, a multiprotein complex essential for elevating transcription of the single X chromosome in the male (X chromosome dosage compensation). The MSL complex specifically associates with the single X chromosome in males and mediates formation of H4K16ac, promoting a two-fold activation of X chromosome. Acts as a histone reader that specifically recognizes and binds histone H3 trimethylated at 'Lys-36' (H3K36me3) and histone H4 monomethylated at 'Lys-20' (H4K20me1). Within the MSL complex, mediates the spreading of the MSL complex from initiation sites on the male X chromosome to flanking chromatin. Following initial recruitment of the MSL complex to male X chromosome by msl-2, msl-3 binds H3K36me3 and promotes spreading of the MSL complex in cis. In addition to its role in dosage compensation in males, promotes germline stem cell differentiation in females: recognizes and binds H3K36me3, promoting recruitment of the ATAC complex and transcription of genes, such as RpS19b. The polypeptide is Protein male-specific lethal-3 (msl-3) (Drosophila virilis (Fruit fly)).